A 500-amino-acid chain; its full sequence is Glucose-1-phosphate adenylyltransferase small subunit 1, chloroplastic/amyloplastic (500 aa).

The transit peptide at 1 to 50 (MAMMAMGAASWAPIPAPARAAAAFYPGRDLAAARRRRGAAARRPFVFTPR) directs the protein to the chloroplast.

This sequence belongs to the bacterial/plant glucose-1-phosphate adenylyltransferase family. In terms of assembly, heterotetramer composed of two small and two large subunits. As to expression, expressed in leaves.

The protein resides in the plastid. It is found in the chloroplast. It localises to the amyloplast. The enzyme catalyses alpha-D-glucose 1-phosphate + ATP + H(+) = ADP-alpha-D-glucose + diphosphate. It participates in glycan biosynthesis; starch biosynthesis. With respect to regulation, activated by 3'phosphoglycerate, inhibited by orthophosphate. Allosteric regulation. In terms of biological role, involved in synthesis of starch. Catalyzes the synthesis of ADP-glucose, a molecule that serves as an activated glycosyl donor for alpha-1,4-glucan synthesis. Essential for starch synthesis in leaf chloroplasts and endosperm amyloplasts. This chain is Glucose-1-phosphate adenylyltransferase small subunit 1, chloroplastic/amyloplastic, found in Oryza sativa subsp. japonica (Rice).